A 466-amino-acid chain; its full sequence is Light-independent protochlorophyllide reductase subunit N (466 aa).

Positions 24, 49, and 109 each coordinate [4Fe-4S] cluster.

It belongs to the BchN/ChlN family. In terms of assembly, protochlorophyllide reductase is composed of three subunits; ChlL, ChlN and ChlB. Forms a heterotetramer of two ChlB and two ChlN subunits. Requires [4Fe-4S] cluster as cofactor.

The catalysed reaction is chlorophyllide a + oxidized 2[4Fe-4S]-[ferredoxin] + 2 ADP + 2 phosphate = protochlorophyllide a + reduced 2[4Fe-4S]-[ferredoxin] + 2 ATP + 2 H2O. It participates in porphyrin-containing compound metabolism; chlorophyll biosynthesis (light-independent). Functionally, component of the dark-operative protochlorophyllide reductase (DPOR) that uses Mg-ATP and reduced ferredoxin to reduce ring D of protochlorophyllide (Pchlide) to form chlorophyllide a (Chlide). This reaction is light-independent. The NB-protein (ChlN-ChlB) is the catalytic component of the complex. In Synechococcus sp. (strain JA-3-3Ab) (Cyanobacteria bacterium Yellowstone A-Prime), this protein is Light-independent protochlorophyllide reductase subunit N.